The sequence spans 287 residues: Nucleotide-binding protein Asuc_0930 (287 aa).

An ATP-binding site is contributed by glycine 8–serine 15. Aspartate 56 to asparagine 59 lines the GTP pocket.

Belongs to the RapZ-like family.

Its function is as follows. Displays ATPase and GTPase activities. This Actinobacillus succinogenes (strain ATCC 55618 / DSM 22257 / CCUG 43843 / 130Z) protein is Nucleotide-binding protein Asuc_0930.